The sequence spans 308 residues: 50 kDa gamma-zein (308 aa).

Positions 1–19 (MKLVLVVLAFIALVSSVSC) are cleaved as a signal peptide. Residues 27 to 159 (CGQQQSHEQQ…QPQQPQQYQQ (133 aa)) are disordered. Residues 55-119 (HHQQQQHQQQ…QHHQQSQGHV (65 aa)) show a composition bias toward low complexity. Basic and acidic residues predominate over residues 120 to 129 (QQHEQSHEQH). Over residues 130–159 (QGQSHEQQHQQQFQGHDKQQQPQQPQQYQQ) the composition is skewed to low complexity. Cysteine 286 is lipidated: GPI-anchor amidated cysteine. The propeptide at 287–308 (GLYHSYYQNNPCSSNDISGVCN) is removed in mature form.

It belongs to the gliadin/glutenin family. Interacts with OP10 (via N-terminus).

Its subcellular location is the cell membrane. Functionally, zeins are major seed storage proteins. The chain is 50 kDa gamma-zein from Zea mays (Maize).